Consider the following 327-residue polypeptide: Annexin A8 (327 aa).

4 Annexin repeats span residues 21–92 (FNPD…ALMY), 93–164 (PPYS…CLLQ), 177–249 (GLVL…TVVK), and 253–324 (NVHS…NLVG). Ca(2+) contacts are provided by Met266, Gly268, Gly270, and Asp310.

Belongs to the annexin family.

Functionally, this protein is an anticoagulant protein that acts as an indirect inhibitor of the thromboplastin-specific complex, which is involved in the blood coagulation cascade. In Mus musculus (Mouse), this protein is Annexin A8 (Anxa8).